Here is a 473-residue protein sequence, read N- to C-terminus: MDVPLASKTFPSPSPSKREQCNIDGHKSSSKHADLNPHVDDSVLGIILGGGAGTRLYPLTKKRAKPAVPLGANYRLIDIPVSNCLNSNISKIYVRTQFNSASLNRHLSRAYGSNIGGYKNEGFVEVLAAQQSPDNPDWFQGTADAVRQYLWLFEEHNVMEYLILAGDHLYRMDYEKFIQAHRETDADITVAALPMDEERATAFGLMKIDEEGRIIEFAEKPKGEQLKAMMVDTTILGLDDARAKEMPYIASMGIYVISKHVMLQLLREQFPGANDFGSEVIPGATSTGMRVQAYLYDGYWEDIGTIEAFYNANLGITKKPIPDFSFYDRSAPIYTQPRHLPPSKVLDADVTDSVIGEGCVIKNCKIHHSVVGLRSCISEGAIIEDTLLMGADYYETEADKKLLAEKGGIPIGIGKNSHIKRAIIDKNARIGDNVMIINVDNVQEAARETDGYFIKSGIVTVIKDALLPSGTVI.

The disordered stretch occupies residues methionine 1–asparagine 36. The span at serine 16–asparagine 36 shows a compositional bias: basic and acidic residues.

Belongs to the bacterial/plant glucose-1-phosphate adenylyltransferase family. Heterotetramer. As to expression, abundantly expressed in the whole grains, a slightly less abundant expression is seen in leaves, while a low level expression is seen in the roots. A greater expression is seen in the endosperm than in the embryo and pericarp layers.

It is found in the plastid. The protein resides in the chloroplast. Its subcellular location is the amyloplast. The enzyme catalyses alpha-D-glucose 1-phosphate + ATP + H(+) = ADP-alpha-D-glucose + diphosphate. The protein operates within glycan biosynthesis; starch biosynthesis. Its activity is regulated as follows. Insensitive to 3'phosphoglycerate and orthophosphate. Functionally, this protein plays a role in synthesis of starch. It catalyzes the synthesis of the activated glycosyl donor, ADP-glucose from Glc-1-P and ATP. The chain is Glucose-1-phosphate adenylyltransferase small subunit, chloroplastic/amyloplastic (AGP-S) from Triticum aestivum (Wheat).